The chain runs to 255 residues: Ribonuclease PH (255 aa).

Phosphate contacts are provided by residues Arg-86 and 124-126 (GTR).

This sequence belongs to the RNase PH family. Homohexameric ring arranged as a trimer of dimers.

The catalysed reaction is tRNA(n+1) + phosphate = tRNA(n) + a ribonucleoside 5'-diphosphate. Its function is as follows. Phosphorolytic 3'-5' exoribonuclease that plays an important role in tRNA 3'-end maturation. Removes nucleotide residues following the 3'-CCA terminus of tRNAs; can also add nucleotides to the ends of RNA molecules by using nucleoside diphosphates as substrates, but this may not be physiologically important. Probably plays a role in initiation of 16S rRNA degradation (leading to ribosome degradation) during starvation. In Geobacillus sp. (strain WCH70), this protein is Ribonuclease PH.